Here is a 399-residue protein sequence, read N- to C-terminus: MLRWTTAGESHGRALVAMLEGMVAGVPITSEEIGAQLKRRRLGYGRGARMKFEQDQVTMLAGVRHGLTLGGPIAIEIGNTEWPKWESVMSPDPVDPADLDVARNAPLTRPRPGHADYAGMLKYGFDDARPVLERASARETAARVAAGTVARAFLREALGVEVLSHVISIGASKPYDGPAPQFSDLSAIDDSPVRAFDKASEELMIAEIEAAKRDGDTLGGVVEVVADGLPVGLGSFTSGENRLDSQLAAAVMGIQAIKGVEIGDGFETARRRGSVAHDEMYPGPDGVVRSTNRAGGLEGGMTNGQPLRVRAAMKPISTVPRALATVDMTSGEEAVAIHQRSDVCAVPAAGVVVETMVALVLARAALEKFGGDSLAETRANIDSYLRAVAEREPAAQASS.

2 residues coordinate NADP(+): arginine 40 and arginine 46. Residues 134–136, 255–256, glycine 299, 314–318, and arginine 340 each bind FMN; these read RAS, QA, and KPIST.

It belongs to the chorismate synthase family. As to quaternary structure, homotetramer. FMNH2 serves as cofactor.

The enzyme catalyses 5-O-(1-carboxyvinyl)-3-phosphoshikimate = chorismate + phosphate. It participates in metabolic intermediate biosynthesis; chorismate biosynthesis; chorismate from D-erythrose 4-phosphate and phosphoenolpyruvate: step 7/7. Its function is as follows. Catalyzes the anti-1,4-elimination of the C-3 phosphate and the C-6 proR hydrogen from 5-enolpyruvylshikimate-3-phosphate (EPSP) to yield chorismate, which is the branch point compound that serves as the starting substrate for the three terminal pathways of aromatic amino acid biosynthesis. This reaction introduces a second double bond into the aromatic ring system. The chain is Chorismate synthase from Mycolicibacterium smegmatis (strain ATCC 700084 / mc(2)155) (Mycobacterium smegmatis).